The following is a 172-amino-acid chain: Ribosome maturation factor RimM (172 aa).

The 73-residue stretch at 96 to 168 folds into the PRC barrel domain; the sequence is EGEFYYHQII…RVDVELMEGL (73 aa).

Belongs to the RimM family. Binds ribosomal protein uS19.

Its subcellular location is the cytoplasm. Its function is as follows. An accessory protein needed during the final step in the assembly of 30S ribosomal subunit, possibly for assembly of the head region. Essential for efficient processing of 16S rRNA. May be needed both before and after RbfA during the maturation of 16S rRNA. It has affinity for free ribosomal 30S subunits but not for 70S ribosomes. This Streptococcus pyogenes serotype M28 (strain MGAS6180) protein is Ribosome maturation factor RimM.